Reading from the N-terminus, the 1072-residue chain is DNA-directed RNA polymerase subunit beta (1072 aa).

The protein belongs to the RNA polymerase beta chain family. In plastids the minimal PEP RNA polymerase catalytic core is composed of four subunits: alpha, beta, beta', and beta''. When a (nuclear-encoded) sigma factor is associated with the core the holoenzyme is formed, which can initiate transcription.

The protein localises to the plastid. The protein resides in the chloroplast. It catalyses the reaction RNA(n) + a ribonucleoside 5'-triphosphate = RNA(n+1) + diphosphate. Its function is as follows. DNA-dependent RNA polymerase catalyzes the transcription of DNA into RNA using the four ribonucleoside triphosphates as substrates. The protein is DNA-directed RNA polymerase subunit beta of Eucalyptus globulus subsp. globulus (Tasmanian blue gum).